Consider the following 183-residue polypeptide: Ferritin light chain 1 (183 aa).

Residues Gln7 to Ala156 form the Ferritin-like diiron domain. Fe cation-binding residues include Glu54, Glu57, Glu58, Glu61, and Glu64.

This sequence belongs to the ferritin family. In terms of assembly, oligomer of 24 subunits. There are two types of subunits: L (light) chain and H (heavy) chain. The major chain can be light or heavy, depending on the species and tissue type. The functional molecule forms a roughly spherical shell with a diameter of 12 nm and contains a central cavity into which the insoluble mineral iron core is deposited. Interacts with NCOA4.

Its subcellular location is the cytoplasm. The protein resides in the cytoplasmic vesicle. It is found in the autophagosome. It localises to the autolysosome. Stores iron in a soluble, non-toxic, readily available form. Important for iron homeostasis. Iron is taken up in the ferrous form and deposited as ferric hydroxides after oxidation. Also plays a role in delivery of iron to cells. Mediates iron uptake in capsule cells of the developing kidney. Degraded to release iron upon autophagy activation by nutrient starvation. The polypeptide is Ferritin light chain 1 (Ftl1) (Mus musculus (Mouse)).